Consider the following 110-residue polypeptide: UPF0060 membrane protein Bcen_0802 (110 aa).

A run of 4 helical transmembrane segments spans residues 9–29 (ALFAATALAEIVGCYLPWLVL), 34–54 (PAWLLVPAALSLALFAWLLTL), 66–86 (YGGVYIAVALIWLRVVDGVAL), and 88–108 (RWDVAGAVLALGGMAVIALQP).

The protein belongs to the UPF0060 family.

The protein localises to the cell inner membrane. The protein is UPF0060 membrane protein Bcen_0802 of Burkholderia orbicola (strain AU 1054).